The chain runs to 23 residues: Chaperonin GroEL (23 aa).

It belongs to the chaperonin (HSP60) family. As to quaternary structure, forms a cylinder of 14 subunits composed of two heptameric rings stacked back-to-back. Interacts with the co-chaperonin GroES. Post-translationally, phosphorylated on threonine.

The protein localises to the cytoplasm. The enzyme catalyses ATP + H2O + a folded polypeptide = ADP + phosphate + an unfolded polypeptide.. Together with its co-chaperonin GroES, plays an essential role in assisting protein folding. The GroEL-GroES system forms a nano-cage that allows encapsulation of the non-native substrate proteins and provides a physical environment optimized to promote and accelerate protein folding. In Acidithiobacillus ferrooxidans (Thiobacillus ferrooxidans), this protein is Chaperonin GroEL.